Consider the following 130-residue polypeptide: Small ribosomal subunit protein uS9 (130 aa).

The protein belongs to the universal ribosomal protein uS9 family.

In Burkholderia mallei (strain NCTC 10247), this protein is Small ribosomal subunit protein uS9.